A 277-amino-acid polypeptide reads, in one-letter code: Carbonyl reductase [NADPH] 1 (277 aa).

The residue at position 2 (Ser2) is an N-acetylserine. Phosphoserine is present on residues Ser2 and Ser30. NADP(+)-binding positions include 10–34 (VTGGNKGIGLAIVRDLCRLFSGDVV), 63–64 (DI), and Asn90. Glutathione is bound by residues 95–97 (FKV) and Gln106. Residue Ser140 participates in substrate binding. A glutathione-binding site is contributed by 193 to 194 (AY). Tyr194 serves as the catalytic Proton acceptor. NADP(+) is bound by residues 194–198 (YGVTK) and 231–233 (VRT). Lys239 carries the N6-1-carboxyethyl lysine modification.

The protein belongs to the short-chain dehydrogenases/reductases (SDR) family. In terms of assembly, monomer. In terms of tissue distribution, expressed in kidney (at protein level).

The protein localises to the cytoplasm. The catalysed reaction is a secondary alcohol + NADP(+) = a ketone + NADPH + H(+). It catalyses the reaction a primary alcohol + NADP(+) = an aldehyde + NADPH + H(+). The enzyme catalyses prostaglandin F2alpha + NADP(+) = prostaglandin E2 + NADPH + H(+). It carries out the reaction prostaglandin E1 + NADP(+) = 15-oxoprostaglandin E1 + NADPH + H(+). The catalysed reaction is menadione + NADPH + H(+) = menadiol + NADP(+). It catalyses the reaction prostaglandin D2 + NADP(+) = 15-oxoprostaglandin D2 + NADPH + H(+). The enzyme catalyses prostaglandin E2 + NADP(+) = 15-oxoprostaglandin E2 + NADPH + H(+). It carries out the reaction prostaglandin F2alpha + NADP(+) = 15-oxoprostaglandin F2alpha + NADPH + H(+). The catalysed reaction is daunorubicin + NADPH + H(+) = 13-dihydrodaunorubicin + NADP(+). It catalyses the reaction S-nitrosoglutathione + NADPH + H(+) = S-(hydroxysulfenamide)glutathione + NADP(+). The enzyme catalyses cortisol + NADPH + H(+) = 20beta-dihydrocortisol + NADP(+). It carries out the reaction corticosterone + NADPH + H(+) = 20beta-dihydrocorticosterone + NADP(+). With respect to regulation, inhibited by quercetin, rutenin and its derivatives. In terms of biological role, NADPH-dependent reductase with broad substrate specificity. Catalyzes the reduction of a wide variety of carbonyl compounds including quinones, prostaglandins, menadione, plus various xenobiotics. Catalyzes the reduction of the antitumor anthracyclines doxorubicin and daunorubicin to the cardiotoxic compounds doxorubicinol and daunorubicinol. Can convert prostaglandin E to prostaglandin F2-alpha. Can bind glutathione, which explains its higher affinity for glutathione-conjugated substrates. Catalyzes the reduction of S-nitrosoglutathione. In addition, participates in the glucocorticoid metabolism by catalyzing the NADPH-dependent cortisol/corticosterone into 20beta-dihydrocortisol (20b-DHF) or 20beta-corticosterone (20b-DHB), which are weak agonists of NR3C1 and NR3C2 in adipose tissue. The polypeptide is Carbonyl reductase [NADPH] 1 (Homo sapiens (Human)).